A 128-amino-acid chain; its full sequence is ATP synthase epsilon chain (128 aa).

A disordered region spans residues 98–128; the sequence is EALDMPSSTPEQAQIKDAAVRRARGQLRASR. The segment covering 118 to 128 has biased composition (basic residues); sequence RRARGQLRASR.

The protein belongs to the ATPase epsilon chain family. As to quaternary structure, F-type ATPases have 2 components, CF(1) - the catalytic core - and CF(0) - the membrane proton channel. CF(1) has five subunits: alpha(3), beta(3), gamma(1), delta(1), epsilon(1). CF(0) has three main subunits: a, b and c.

It is found in the cell inner membrane. In terms of biological role, produces ATP from ADP in the presence of a proton gradient across the membrane. The chain is ATP synthase epsilon chain from Rhodopirellula baltica (strain DSM 10527 / NCIMB 13988 / SH1).